The chain runs to 118 residues: Ribulose bisphosphate carboxylase small subunit (118 aa).

It belongs to the RuBisCO small chain family. Heterohexadecamer of 8 large and 8 small subunits.

RuBisCO catalyzes two reactions: the carboxylation of D-ribulose 1,5-bisphosphate, the primary event in carbon dioxide fixation, as well as the oxidative fragmentation of the pentose substrate. Both reactions occur simultaneously and in competition at the same active site. Although the small subunit is not catalytic it is essential for maximal activity. The protein is Ribulose bisphosphate carboxylase small subunit of Rhodobacter capsulatus (Rhodopseudomonas capsulata).